Reading from the N-terminus, the 493-residue chain is NADH-quinone oxidoreductase subunit N (493 aa).

A run of 14 helical transmembrane segments spans residues 8–28, 34–54, 71–91, 102–122, 123–143, 157–177, 200–220, 232–252, 266–286, 294–314, 325–345, 370–390, 405–427, and 443–463; these read ALLP…AIAI, LVFW…PHAS, GLFF…LCLA, EIFV…SSAH, LAMF…MIAY, YLML…MVYG, ALAG…LVPF, PTPV…ALLL, FLCV…LLAL, LLAY…VAAG, IAFY…AISA, AAVL…VGFV, WPLV…RVVL, and PAAG…GLFP. Positions 473–493 are disordered; the sequence is VPQPPPTADSPQRLTATGGLP.

Belongs to the complex I subunit 2 family. NDH-1 is composed of 14 different subunits. Subunits NuoA, H, J, K, L, M, N constitute the membrane sector of the complex.

The protein localises to the cell inner membrane. The enzyme catalyses a quinone + NADH + 5 H(+)(in) = a quinol + NAD(+) + 4 H(+)(out). NDH-1 shuttles electrons from NADH, via FMN and iron-sulfur (Fe-S) centers, to quinones in the respiratory chain. The immediate electron acceptor for the enzyme in this species is believed to be ubiquinone. Couples the redox reaction to proton translocation (for every two electrons transferred, four hydrogen ions are translocated across the cytoplasmic membrane), and thus conserves the redox energy in a proton gradient. This chain is NADH-quinone oxidoreductase subunit N, found in Methylococcus capsulatus (strain ATCC 33009 / NCIMB 11132 / Bath).